Consider the following 1138-residue polypeptide: Ras guanine nucleotide exchange factor N (1138 aa).

3 LRR repeats span residues 1–16 (MSYN…ITQL), 18–39 (HLKS…SYFG), and 43–64 (TLQK…FYLL). Disordered regions lie at residues 126–180 (ALKN…SNNN), 239–301 (FNSE…GSRK), 319–360 (NKTH…SDTN), 389–411 (IDSP…SPPQ), 473–540 (GSPT…NNNN), 601–643 (ATTV…TSGS), and 660–680 (MSDV…SQSG). The segment covering 140 to 158 (KTKGLHSSSSNINTSNNIT) has biased composition (low complexity). Positions 263–275 (RAQTISGKQPSII) are enriched in polar residues. Positions 283–299 (SGGGSGNNNNSGGGGGS) are enriched in gly residues. The segment covering 326 to 352 (GHSSSSQSNSTTNTPSISSTPYPTSTI) has biased composition (low complexity). The span at 393 to 405 (RTLERRNSSRDDI) shows a compositional bias: basic and acidic residues. A compositionally biased stretch (pro residues) spans 487–496 (PQHPPPPPPI). The span at 498–511 (DNNQPKLNQSQNLI) shows a compositional bias: polar residues. Low complexity-rich tracts occupy residues 512–540 (NTNS…NNNN) and 605–634 (NSNS…NSPQ). In terms of domain architecture, N-terminal Ras-GEF spans 733 to 855 (GVPKVKNITL…LLLNIINMKR (123 aa)). One can recognise a Ras-GEF domain in the interval 891 to 1118 (RPHEIARQLT…YSEASKIEEK (228 aa)).

Promotes the exchange of Ras-bound GDP by GTP. May play a role in chemotaxis. The polypeptide is Ras guanine nucleotide exchange factor N (gefN) (Dictyostelium discoideum (Social amoeba)).